Reading from the N-terminus, the 229-residue chain is Coiled-coil domain-containing protein 134 (229 aa).

The N-terminal stretch at 1 to 22 (MDLLQFLAAFSVLLWPGTEVTG) is a signal peptide. N-linked (GlcNAc...) asparagine glycosylation is present at asparagine 148. The segment at 182–229 (FKTDQTEFIPSTDPFQKALREEEKRRKKEERRKEIRKGPRISRSQSEL) is disordered. The stretch at 196–218 (FQKALREEEKRRKKEERRKEIRK) forms a coiled coil. Positions 226–229 (QSEL) match the Prevents secretion from ER motif.

The protein belongs to the CCDC134 family. Interacts with TADA2A. Associates with the PCAF complex via TADA2A binding. O-glycosylated, with additional sialic acid modifications.

It is found in the endoplasmic reticulum lumen. The protein localises to the secreted. It localises to the cytoplasm. Its subcellular location is the nucleus. Functionally, molecular adapter required to prevent protein hyperglycosylation of HSP90B1: during translation, associates with nascent HSP90B1 and the STT3A catalytic component of the OST-A complex and tethers them to a specialized translocon that forms a microenvironment for HSP90B1 folding. In the CCDC134-containing translocon, STT3A associates with the SRT pseudosubstrate motif of HSP90B1, preventing access to facultative glycosylation sites until folding is completed, preventing hyperglycosylation and subsequent degradation of HSP90B1. In extracellular secreted form, promotes proliferation and activation of CD8(+) T-cells, suggesting a cytokine-like function. May inhibit ERK and JNK signaling activity. May suppress cell migration and invasion activity, via its effects on ERK and JNK signaling. May also localize in the nucleus: enhances stability of the PCAF histone acetyltransferase (HAT) complex member TADA2A and thus promotes PCAF-mediated histone acetyltransferase activity. Has a critical role in the regulation of osteogenesis and bone development. In Mus musculus (Mouse), this protein is Coiled-coil domain-containing protein 134 (Ccdc134).